The sequence spans 194 residues: Small ribosomal subunit protein uS4c (194 aa).

The tract at residues 1–29 (RFKKIRRLGTLPGLTSKRPRSGSDLKNPL) is disordered. One can recognise an S4 RNA-binding domain in the interval 82 to 143 (MRLDNILFRL…KQRSKALIQN (62 aa)).

This sequence belongs to the universal ribosomal protein uS4 family. Part of the 30S ribosomal subunit. Contacts protein S5. The interaction surface between S4 and S5 is involved in control of translational fidelity.

The protein localises to the plastid. Its subcellular location is the chloroplast. One of the primary rRNA binding proteins, it binds directly to 16S rRNA where it nucleates assembly of the body of the 30S subunit. Functionally, with S5 and S12 plays an important role in translational accuracy. This is Small ribosomal subunit protein uS4c (rps4) from Furcraea foetida (Mauritius hemp).